The primary structure comprises 148 residues: Male-specific protein scotti (148 aa).

The interval Pro56–Lys78 is disordered. Asn129 is a glycosylation site (N-linked (GlcNAc...) asparagine).

Belongs to the male-specific scotti family.

In terms of biological role, post-meiotically transcribed gene that has a role in late spermiogenesis; required for actin cone progression during spermatid individualization. The polypeptide is Male-specific protein scotti (Drosophila sechellia (Fruit fly)).